Consider the following 423-residue polypeptide: Sulfate adenylyltransferase (423 aa).

The sulfate site is built by glutamine 207 and arginine 209. ATP contacts are provided by residues 207–210 (QLRN) and 301–304 (GRDH). Catalysis depends on residues arginine 209 and asparagine 210. Position 305 (alanine 305) interacts with sulfate.

Belongs to the sulfate adenylyltransferase family.

Its subcellular location is the mitosome. It catalyses the reaction sulfate + ATP + H(+) = adenosine 5'-phosphosulfate + diphosphate. Its pathway is sulfur metabolism; hydrogen sulfide biosynthesis; sulfite from sulfate: step 1/3. Functionally, catalyzes the first intracellular reaction of sulfate assimilation, forming adenosine-5'-phosphosulfate (APS) from inorganic sulfate and ATP. The chain is Sulfate adenylyltransferase from Entamoeba histolytica (strain ATCC 30459 / HM-1:IMSS / ABRM).